Consider the following 128-residue polypeptide: Fluoride-specific ion channel FluC (128 aa).

4 consecutive transmembrane segments (helical) span residues 4–24 (VFLL…VSTW), 35–55 (FGIL…WSIA), 67–87 (FLFT…LDTM), and 99–119 (LLNV…GIIL). Na(+) contacts are provided by Gly-74 and Thr-77.

Belongs to the fluoride channel Fluc/FEX (TC 1.A.43) family.

It localises to the cell inner membrane. The enzyme catalyses fluoride(in) = fluoride(out). Na(+) is not transported, but it plays an essential structural role and its presence is essential for fluoride channel function. Functionally, fluoride-specific ion channel. Important for reducing fluoride concentration in the cell, thus reducing its toxicity. In Parabacteroides distasonis (strain ATCC 8503 / DSM 20701 / CIP 104284 / JCM 5825 / NCTC 11152), this protein is Fluoride-specific ion channel FluC.